Consider the following 450-residue polypeptide: Glucose-6-phosphate isomerase (450 aa).

Position 39 is a phosphothreonine (Thr39). Catalysis depends on Glu291, which acts as the Proton donor. Residues His312 and Lys426 contribute to the active site.

The protein belongs to the GPI family.

It is found in the cytoplasm. It catalyses the reaction alpha-D-glucose 6-phosphate = beta-D-fructose 6-phosphate. The protein operates within carbohydrate biosynthesis; gluconeogenesis. It participates in carbohydrate degradation; glycolysis; D-glyceraldehyde 3-phosphate and glycerone phosphate from D-glucose: step 2/4. Catalyzes the reversible isomerization of glucose-6-phosphate to fructose-6-phosphate. The chain is Glucose-6-phosphate isomerase from Bacillus cereus (strain AH187).